The sequence spans 686 residues: Probable metal-nicotianamine transporter YSL4 (686 aa).

Helical transmembrane passes span 27–47 (WLVTPRAMAVAVLLGIVFCFV), 53–73 (MMTGFVPALNMPVTVLSFFLL), 96–116 (MFLITCVITCLNLAITGGFAT), 151–171 (FFLIGMAGVLSNIPLNQIMII), 203–223 (VMTIFKVFFGSFSWSIFQWFY), 264–284 (IVNFGLLFGAIISWGFLYPYL), 308–328 (VFISVTLIVTDGLINFLILVT), 373–393 (IPMFVPVAAYVAWTAISMVAM), 405–425 (VGVLYLAIPVVGFCNTYATGL), 441–461 (IFAAWIARPGAIVASLLVSGI), 488–508 (AMIAGQVFGVALSSVVSPCIF), 554–574 (CVELCVIAVLVTIAIDALVLV), 596–616 (FFAGSYFTLDMCLGGLLLLLW), and 629–649 (AAVAAGLICGEGLFTLPSALL).

The protein belongs to the YSL (TC 2.A.67.2) family.

It localises to the membrane. Its function is as follows. May be involved in the transport of nicotianamine-chelated metals. The chain is Probable metal-nicotianamine transporter YSL4 (YSL4) from Oryza sativa subsp. japonica (Rice).